The chain runs to 458 residues: A-type ATP synthase subunit B (458 aa).

Belongs to the ATPase alpha/beta chains family. Has multiple subunits with at least A(3), B(3), C, D, E, F, H, I and proteolipid K(x).

The protein resides in the cell membrane. In terms of biological role, component of the A-type ATP synthase that produces ATP from ADP in the presence of a proton gradient across the membrane. The B chain is a regulatory subunit. The chain is A-type ATP synthase subunit B from Methanocorpusculum labreanum (strain ATCC 43576 / DSM 4855 / Z).